A 153-amino-acid polypeptide reads, in one-letter code: MGKIACITGPPGAGKSTVCSKLREYGYNCKEGNELAKEYGCLFDEEVDVECLEEKLAEDRFDGIICSHYSHLLGCSTVFILEADLNDLIDRMRARGYSEEKIQENIETQMSSIFYYESLERLPANRIFTLYNGNIDETAKRIISIIERSRNNK.

Residues G12, G14, K15, S16, and T17 each contribute to the ATP site. Positions 31–47 (EGNELAKEYGCLFDEEV) are NMP. Residues 94–104 (ARGYSEEKIQE) are LID. R95 lines the ATP pocket.

This sequence belongs to the adenylate kinase family. AK6 subfamily. In terms of assembly, interacts with uS11. Not a structural component of 40S pre-ribosomes, but transiently interacts with them by binding to uS11.

It carries out the reaction AMP + ATP = 2 ADP. It catalyses the reaction ATP + H2O = ADP + phosphate + H(+). Broad-specificity nucleoside monophosphate (NMP) kinase that catalyzes the reversible transfer of the terminal phosphate group between nucleoside triphosphates and monophosphates. Also has ATPase activity. Involved in the late maturation steps of the 30S ribosomal particles, specifically 16S rRNA maturation. While NMP activity is not required for ribosome maturation, ATPase activity is. Associates transiently with small ribosomal subunit protein uS11. ATP hydrolysis breaks the interaction with uS11. May temporarily remove uS11 from the ribosome to enable a conformational change of the ribosomal RNA that is needed for the final maturation step of the small ribosomal subunit. The polypeptide is Putative adenylate kinase (Thermoplasma volcanium (strain ATCC 51530 / DSM 4299 / JCM 9571 / NBRC 15438 / GSS1)).